The sequence spans 85 residues: UPF0291 protein SPH_1589 (85 aa).

The interval 62 to 85 (TPEKLRQVQREKGLHGRSLDDPNS) is disordered.

The protein belongs to the UPF0291 family.

Its subcellular location is the cytoplasm. The protein is UPF0291 protein SPH_1589 of Streptococcus pneumoniae (strain Hungary19A-6).